The sequence spans 118 residues: Mitochondrial protein YPR099C (118 aa).

It is found in the mitochondrion. Its function is as follows. Essential for the functional mitochondria and respiratory growth. This Saccharomyces cerevisiae (strain ATCC 204508 / S288c) (Baker's yeast) protein is Mitochondrial protein YPR099C.